Here is a 317-residue protein sequence, read N- to C-terminus: Acetyl-coenzyme A carboxylase carboxyl transferase subunit alpha (317 aa).

The region spanning 40-293 (LEVRVREAIL…GDVIANALAE (254 aa)) is the CoA carboxyltransferase C-terminal domain.

The protein belongs to the AccA family. In terms of assembly, acetyl-CoA carboxylase is a heterohexamer composed of biotin carboxyl carrier protein (AccB), biotin carboxylase (AccC) and two subunits each of ACCase subunit alpha (AccA) and ACCase subunit beta (AccD).

The protein localises to the cytoplasm. The enzyme catalyses N(6)-carboxybiotinyl-L-lysyl-[protein] + acetyl-CoA = N(6)-biotinyl-L-lysyl-[protein] + malonyl-CoA. The protein operates within lipid metabolism; malonyl-CoA biosynthesis; malonyl-CoA from acetyl-CoA: step 1/1. Its function is as follows. Component of the acetyl coenzyme A carboxylase (ACC) complex. First, biotin carboxylase catalyzes the carboxylation of biotin on its carrier protein (BCCP) and then the CO(2) group is transferred by the carboxyltransferase to acetyl-CoA to form malonyl-CoA. This is Acetyl-coenzyme A carboxylase carboxyl transferase subunit alpha from Rhizobium etli (strain CIAT 652).